The sequence spans 122 residues: Large ribosomal subunit protein uL14 (122 aa).

It belongs to the universal ribosomal protein uL14 family. Part of the 50S ribosomal subunit. Forms a cluster with proteins L3 and L19. In the 70S ribosome, L14 and L19 interact and together make contacts with the 16S rRNA in bridges B5 and B8.

Its function is as follows. Binds to 23S rRNA. Forms part of two intersubunit bridges in the 70S ribosome. The sequence is that of Large ribosomal subunit protein uL14 from Shewanella loihica (strain ATCC BAA-1088 / PV-4).